Here is a 60-residue protein sequence, read N- to C-terminus: UPF0434 protein Bpro_2950 (60 aa).

The protein belongs to the UPF0434 family.

The protein is UPF0434 protein Bpro_2950 of Polaromonas sp. (strain JS666 / ATCC BAA-500).